Reading from the N-terminus, the 556-residue chain is 2-isopropylmalate synthase (556 aa).

The region spanning 33–307 (PIWLSTDLRD…DPQLDFSDID (275 aa)) is the Pyruvate carboxyltransferase domain. D42, H246, H248, and N282 together coordinate Mg(2+). The interval 439 to 556 (ASAPYALKGH…ALSQAESRAA (118 aa)) is regulatory domain.

This sequence belongs to the alpha-IPM synthase/homocitrate synthase family. LeuA type 2 subfamily. In terms of assembly, homodimer. Mg(2+) serves as cofactor.

The protein resides in the cytoplasm. It catalyses the reaction 3-methyl-2-oxobutanoate + acetyl-CoA + H2O = (2S)-2-isopropylmalate + CoA + H(+). It participates in amino-acid biosynthesis; L-leucine biosynthesis; L-leucine from 3-methyl-2-oxobutanoate: step 1/4. Its function is as follows. Catalyzes the condensation of the acetyl group of acetyl-CoA with 3-methyl-2-oxobutanoate (2-ketoisovalerate) to form 3-carboxy-3-hydroxy-4-methylpentanoate (2-isopropylmalate). The polypeptide is 2-isopropylmalate synthase (Ectopseudomonas mendocina (strain ymp) (Pseudomonas mendocina)).